The primary structure comprises 347 residues: sn-glycerol-3-phosphate import ATP-binding protein UgpC 1 (347 aa).

The ABC transporter domain maps to 4-234; sequence IELIDLKKNY…PETVFVAGFI (231 aa). Residue 36-43 participates in ATP binding; sequence GPSGCGKS.

This sequence belongs to the ABC transporter superfamily. sn-glycerol-3-phosphate importer (TC 3.A.1.1.3) family. In terms of assembly, the complex is composed of two ATP-binding proteins (UgpC), two transmembrane proteins (UgpA and UgpE) and a solute-binding protein (UgpB).

It localises to the cell inner membrane. It catalyses the reaction sn-glycerol 3-phosphate(out) + ATP + H2O = sn-glycerol 3-phosphate(in) + ADP + phosphate + H(+). Part of the ABC transporter complex UgpBAEC involved in sn-glycerol-3-phosphate (G3P) import. Responsible for energy coupling to the transport system. This is sn-glycerol-3-phosphate import ATP-binding protein UgpC 1 from Rhizobium etli (strain ATCC 51251 / DSM 11541 / JCM 21823 / NBRC 15573 / CFN 42).